The primary structure comprises 337 residues: MLTLPFDESVVMPESQMCRKFSRECEDQKQIKKPESFSKQIVLRGKSIKRAPGEETEKEEEEEDREEEDENGLPRRRGLRKKKTTKLRLERVKFRRQEANARERNRMHGLNDALDNLRKVVPCYSKTQKLSKIETLRLAKNYIWALSEILRIGKRPDLLTFVQNLCKGLSQPTTNLVAGCLQLNARSFLMGQGGEAAHHTRSPYSTFYPPYHSPELTTPPGHGTLDNSKSMKPYNYCSAYESFYESTSPECASPQFEGPLSPPPINYNGIFSLKQEETLDYGKNYNYGMHYCAVPPRGPLGQGAMFRLPTDSHFPYDLHLRSQSLTMQDELNAVFHN.

The segment at 43-82 (LRGKSIKRAPGEETEKEEEEEDREEEDENGLPRRRGLRKK) is disordered. Acidic residues predominate over residues 54 to 71 (EETEKEEEEEDREEEDEN). The Nuclear localization signal motif lies at 80–86 (RKKKTTK). The region spanning 94–146 (FRRQEANARERNRMHGLNDALDNLRKVVPCYSKTQKLSKIETLRLAKNYIWAL) is the bHLH domain.

In terms of assembly, efficient DNA binding requires dimerization with another bHLH protein.

The protein resides in the nucleus. Activates E box-dependent transcription in collaboration with TCF3/E47. May be a trans-acting factor involved in the development and maintenance of the mammalian nervous system. Transactivates the promoter of its own gene. This is Neurogenic differentiation factor 6 (NEUROD6) from Homo sapiens (Human).